The following is a 137-amino-acid chain: Prefoldin subunit alpha (137 aa).

It belongs to the prefoldin subunit alpha family. Heterohexamer of two alpha and four beta subunits.

It is found in the cytoplasm. Functionally, molecular chaperone capable of stabilizing a range of proteins. Seems to fulfill an ATP-independent, HSP70-like function in archaeal de novo protein folding. This is Prefoldin subunit alpha (pfdA) from Archaeoglobus fulgidus (strain ATCC 49558 / DSM 4304 / JCM 9628 / NBRC 100126 / VC-16).